The primary structure comprises 960 residues: Gamma-aminobutyric acid type B receptor subunit 1 (960 aa).

The N-terminal stretch at 1 to 19 (MLLLLLVPLFLRPLGAGGA) is a signal peptide. The Extracellular segment spans residues 20 to 590 (QTPNATSEGC…KTFRFLSQKL (571 aa)). Residues N23 and N83 are each glycosylated (N-linked (GlcNAc...) asparagine). Sushi domains follow at residues 29-95 (CQII…PSRC) and 97-158 (RICS…HCQV). 3 disulfide bridges follow: C99/C144, C130/C156, and C219/C245. The 4-aminobutanoate site is built by S246, S269, H286, and Y366. C375 and C409 are disulfide-bonded. N408 and N439 each carry an N-linked (GlcNAc...) asparagine glycan. E465 is a binding site for 4-aminobutanoate. N481, N501, and N513 each carry an N-linked (GlcNAc...) asparagine glycan. Residues 591–611 (FISVSVLSSLGIVLAVVCLSF) form a helical membrane-spanning segment. At 612–630 (NIYNSHVRYIQNSQPNLNN) the chain is on the cytoplasmic side. Residues 631 to 651 (LTAVGCSLALAAVFPLGLDGY) traverse the membrane as a helical segment. Residues 652-666 (HIGRSQFPFVCQARL) lie on the Extracellular side of the membrane. The helical transmembrane segment at 667–687 (WLLGLGFSLGYGSMFTKIWWV) threads the bilayer. Over 688–709 (HTVFTKKEEKKEWRKTLEPWKL) the chain is Cytoplasmic. A helical membrane pass occupies residues 710 to 730 (YATVGLLVGMDVLTLAIWQIV). Over 731–767 (DPLHRTIETFAKEEPKEDIDVSILPQLEHCSSKKMNT) the chain is Extracellular. The chain crosses the membrane as a helical span at residues 768-788 (WLGIFYGYKGLLLLLGIFLAY). At 789–803 (ETKSVSTEKINDHRA) the chain is on the cytoplasmic side. A helical transmembrane segment spans residues 804–824 (VGMAIYNVAVLCLITAPVTMI). Residues 825–832 (LSSQQDAA) lie on the Extracellular side of the membrane. The chain crosses the membrane as a helical span at residues 833–853 (FAFASLAIVFSSYITLVVLFV). Residues 854-960 (PKMRRLITRG…DGSRVHLLYK (107 aa)) lie on the Cytoplasmic side of the membrane. Positions 866–879 (QSETQDTMKTGSST) are enriched in polar residues. Disordered stretches follow at residues 866–891 (QSETQDTMKTGSSTNNNEEEKSRLLE) and 908–960 (VSEL…LLYK). A coiled-coil region spans residues 870 to 924 (QDTMKTGSSTNNNEEEKSRLLEKENRELEKIIAEKEERVSELRHQLQSRQQLRSR). Residue T872 is modified to Phosphothreonine. The interaction with ATF4 stretch occupies residues 887 to 915 (SRLLEKENRELEKIIAEKEERVSELRHQL). Phosphothreonine is present on T929.

This sequence belongs to the G-protein coupled receptor 3 family. GABA-B receptor subfamily. Heterodimer of GABBR1 and GABBR2. Homodimers may form, but are inactive. Interacts (via C-terminus) with ATF4 (via leucine zipper domain). Interacts with JAKMIP1. In terms of tissue distribution, ubiquitously expressed in tissues including the forebrain, cerebellum, eye, atrium, ventricle, lung, stomach, small intestine, colon, liver, spleen, kidney, urinary bladder and skeletal muscle. Expressed at low levels in testis, and more highly in brain regions. Expression is high the brain regions including cerebral cortical layers, with higher expression in VIb than in the II-V layers, pyramidal CA1-CA3 cell layers and granular cell layers of the hippocampus, granular cell layers of the dentate gyrus, including the caudate, putamen, nucleus accumbens and olfactory tubercle, the granular layer cell layers of the medial habenula, in the cerebellum, predominantly in Purkinje cells, and in the granule cell layer. Also expressed in areas of the brain including the medial geniculate nucleus, substantia nigra, pars compacta, the ventral tegmental area, and in several thalamic, amygdaloid and hypothalamic nuclei, such as the arcuate nucleus of the hypothalamus and mammilary bodies of the hypothalamus. Expressed in the amacrine cell of the retina. Expressed in the brain, spinal cord, stomach, testis, adrenal gland, pituitary, spleen and prostate. As to expression, expressed in the brain, spinal cord, stomach, testis, kidney and liver. In terms of tissue distribution, ubiquitously expressed. Expressed in the forebrain, cerebellum, eye, kidney and urinary bladder. As to expression, ubiquitously expressed with high expression in the pyramidal CA1-CA3 cell layers of the hippocampus, the granule cell layers of the dentate gyrus and olfactory tubercle, the whole cortex, and Purkinje cells of the cerebellum. Moderate expression in the granule cell layer of the cerebellum.

The protein localises to the cell membrane. It localises to the postsynaptic cell membrane. The protein resides in the cell projection. Its subcellular location is the dendrite. It is found in the perikaryon. Component of a heterodimeric G-protein coupled receptor for GABA, formed by GABBR1 and GABBR2. Within the heterodimeric GABA receptor, only GABBR1 seems to bind agonists, while GABBR2 mediates coupling to G proteins. Ligand binding causes a conformation change that triggers signaling via guanine nucleotide-binding proteins (G proteins) and modulates the activity of down-stream effectors, such as adenylate cyclase. Signaling inhibits adenylate cyclase, stimulates phospholipase A2, activates potassium channels, inactivates voltage-dependent calcium-channels and modulates inositol phospholipid hydrolysis. Calcium is required for high affinity binding to GABA. Plays a critical role in the fine-tuning of inhibitory synaptic transmission. Pre-synaptic GABA receptor inhibits neurotransmitter release by down-regulating high-voltage activated calcium channels, whereas postsynaptic GABA receptor decreases neuronal excitability by activating a prominent inwardly rectifying potassium (Kir) conductance that underlies the late inhibitory postsynaptic potentials. Not only implicated in synaptic inhibition but also in hippocampal long-term potentiation, slow wave sleep, muscle relaxation and antinociception. The chain is Gamma-aminobutyric acid type B receptor subunit 1 (Gabbr1) from Rattus norvegicus (Rat).